A 345-amino-acid polypeptide reads, in one-letter code: Fe(3+) ions import ATP-binding protein FbpC (345 aa).

One can recognise an ABC transporter domain in the interval 4–236 (LELHGIGKSY…PVDEPTASFL (233 aa)). 36 to 43 (GPSGSGKT) provides a ligand contact to ATP.

Belongs to the ABC transporter superfamily. Fe(3+) ion importer (TC 3.A.1.10) family. The complex is composed of two ATP-binding proteins (FbpC), two transmembrane proteins (FbpB) and a solute-binding protein (FbpA).

It is found in the cell inner membrane. The enzyme catalyses Fe(3+)(out) + ATP + H2O = Fe(3+)(in) + ADP + phosphate + H(+). Its function is as follows. Part of the ABC transporter complex FbpABC involved in Fe(3+) ions import. Responsible for energy coupling to the transport system. In Serratia marcescens, this protein is Fe(3+) ions import ATP-binding protein FbpC.